A 987-amino-acid polypeptide reads, in one-letter code: VPS35 endosomal protein sorting factor-like (987 aa).

A compositionally biased stretch (low complexity) spans 1-23 (MAERQSASSPTPSSPPQQQQQTP). The disordered stretch occupies residues 1–115 (MAERQSASSP…DPLNNPLEKK (115 aa)). Basic and acidic residues predominate over residues 43-63 (NGREVERHPLNSITKTEDTGK). The segment covering 66 to 111 (QSSLSSNASSLQSAAAAASSSTATTDIDPLNNNNNNNTDIDPLNNP) has biased composition (low complexity).

This sequence belongs to the VPS35L family. Component of the heterotrimeric retriever complex.

The protein localises to the endosome. Functionally, acts as a component of the retriever complex. The retriever complex is a heterotrimeric complex related to retromer cargo-selective complex (CSC) and essential for retromer-independent retrieval and recycling of numerous cargos. In Dictyostelium discoideum (Social amoeba), this protein is VPS35 endosomal protein sorting factor-like.